Consider the following 76-residue polypeptide: Conotoxin Cal5a L3 (76 aa).

The first 22 residues, 1–22 (MRFYIGLMAALMLTSVLRTDSA), serve as a signal peptide directing secretion. Residues 23-42 (SVGQTGTKSELAVIERVIRQ) constitute a propeptide that is removed on maturation. Proline 50 is subject to 4-hydroxyproline. Proline 58, proline 62, and proline 64 each carry 4-hydroxyproline; partial.

Belongs to the conotoxin T superfamily. Post-translationally, contains 2 disulfide bonds that can be either 'C1-C3, C2-C4' or 'C1-C4, C2-C3', since these disulfide connectivities have been observed for conotoxins with cysteine framework V (for examples, see AC P0DQQ7 and AC P81755). Expressed by the venom duct.

The protein localises to the secreted. Its function is as follows. Probable neurotoxin with unknown target. Possibly targets ion channels. The chain is Conotoxin Cal5a L3 from Californiconus californicus (California cone).